The chain runs to 1960 residues: Nuclear pore complex protein Nup98-Nup96 (1960 aa).

A run of 46 repeats spans residues 2–3 (FG), 9–10 (FG), 18–19 (FG), 30–31 (FG), 35–36 (FG), 43–44 (FG), 59–60 (FG), 73–74 (FG), 81–82 (FG), 92–93 (FG), 105–106 (FG), 117–118 (FG), 125–126 (FG), 135–136 (FG), 148–149 (FG), 160–161 (FG), 163–164 (FG), 174–175 (FG), 264–265 (FG), 266–267 (FG), 282–283 (FG), 293–294 (FG), 304–305 (FG), 309–310 (FG), 319–320 (FG), 333–334 (FG), 352–353 (FG), 358–359 (FG), 365–366 (FG), 377–378 (FG), 384–385 (FG), 387–388 (FG), 400–401 (FG), 413–414 (FG), 426–427 (FG), 428–429 (FG), 441–442 (FG), 454–455 (FG), 467–468 (FG), 493–494 (FG), 496–497 (FG), 516–517 (FG), 527–528 (FG), 546–547 (FG), 553–554 (FG), and 565–566 (FG). Positions 2-566 (FGGAKPSFGA…GGSLGGGGFG (565 aa)) are 46 X 2 AA repeats of F-G. 2 disordered regions span residues 698 to 768 (KSVE…WLHP) and 781 to 860 (TGMD…AANQ). A compositionally biased stretch (polar residues) spans 704–718 (NPSSSIGSAPNTPQS). Residues 755-768 (ESQDNGRRESWLHP) are compositionally biased toward basic and acidic residues. Composition is skewed to polar residues over residues 781–794 (TGMD…STLN) and 806–850 (RPSS…SNRS). The Peptidase S59 domain occupies 886–1028 (RVGYYTIPSL…GSWVFRVKHF (143 aa)). The Nucleophile role is filled by serine 1029.

It belongs to the nucleoporin GLFG family. Part of the nuclear pore complex (NPC). Interacts with Rae1. Nuclear pore complex protein Nup98: Interacts with pzg and Chro. Interacts with MBD-R2; the interaction allows Nup98 recruitment to chromatin. Interacts with Trx. Interacts with Wds. Interacts with Mgtor and Cp190. Upon ecdysone stimulation, interacts with EcR, CTCF, su(Hw) and Trl. Post-translationally, isoform A and isoform C are autoproteolytically cleaved to yield Nup98 and Nup96 or Nup98 only, respectively. In terms of tissue distribution, expressed in brain.

Its subcellular location is the chromosome. The protein localises to the nucleus. The protein resides in the nucleoplasm. It is found in the nucleus membrane. It localises to the nuclear pore complex. Functionally, part of the nuclear pore complex (NPC). Required for MAD import as part of the Nup107-160 complex and required for nuclear export of Moe probably via its association with Rae1. Plays a role in nuclear mRNA export. Promotes cell antiviral response by up-regulating FoxK-dependent antiviral gene transcription. In germline stem cells, involved in their maintenance and division together with the TGF-Beta and EGFR signaling pathways. In larval lymph glands, has a role in the maintenance of hematopoiesis by regulating Pvr expression. Its function is as follows. Part of the nuclear pore complex (NPC). In the nucleoplasm, binds to transcriptionally active chromatin with a preference for regulatory regions; co-localizes with RNA polymerase II in a RNA-independent manner and before transition into transcription elongation. Plays a role in the transcriptional memory process by stabilizing enhancer-promoter loops and by mediating anchoring of chromatin to the nuclear pore complex region. During larval development, interacts with trx and MBD-R2 and regulates transcription of developmental genes including ecdysone-responsive genes such as Eip74 and E23. Part of the nuclear pore complex (NPC). This chain is Nuclear pore complex protein Nup98-Nup96, found in Drosophila melanogaster (Fruit fly).